A 338-amino-acid polypeptide reads, in one-letter code: tRNA N6-adenosine threonylcarbamoyltransferase (338 aa).

Fe cation-binding residues include H111 and H115. Substrate-binding positions include 134-138, D167, G180, and N272; that span reads LVSGG. Residue D300 coordinates Fe cation.

The protein belongs to the KAE1 / TsaD family. It depends on Fe(2+) as a cofactor.

It is found in the cytoplasm. The catalysed reaction is L-threonylcarbamoyladenylate + adenosine(37) in tRNA = N(6)-L-threonylcarbamoyladenosine(37) in tRNA + AMP + H(+). In terms of biological role, required for the formation of a threonylcarbamoyl group on adenosine at position 37 (t(6)A37) in tRNAs that read codons beginning with adenine. Is involved in the transfer of the threonylcarbamoyl moiety of threonylcarbamoyl-AMP (TC-AMP) to the N6 group of A37, together with TsaE and TsaB. TsaD likely plays a direct catalytic role in this reaction. The chain is tRNA N6-adenosine threonylcarbamoyltransferase from Aliivibrio fischeri (strain MJ11) (Vibrio fischeri).